A 318-amino-acid chain; its full sequence is Pantothenate kinase (318 aa).

96 to 103 is an ATP binding site; that stretch reads GSVSVGKS.

It belongs to the prokaryotic pantothenate kinase family.

It localises to the cytoplasm. It carries out the reaction (R)-pantothenate + ATP = (R)-4'-phosphopantothenate + ADP + H(+). It participates in cofactor biosynthesis; coenzyme A biosynthesis; CoA from (R)-pantothenate: step 1/5. The sequence is that of Pantothenate kinase from Bradyrhizobium sp. (strain BTAi1 / ATCC BAA-1182).